The following is a 135-amino-acid chain: Large ribosomal subunit protein eL32 (135 aa).

This sequence belongs to the eukaryotic ribosomal protein eL32 family.

The polypeptide is Large ribosomal subunit protein eL32 (rpl32e) (Methanococcus maripaludis (strain DSM 14266 / JCM 13030 / NBRC 101832 / S2 / LL)).